We begin with the raw amino-acid sequence, 51 residues long: Glutamate dehydrogenase (51 aa).

Lysine 31 is a substrate binding site.

It belongs to the Glu/Leu/Phe/Val dehydrogenases family. In terms of assembly, homohexamer.

The protein localises to the mitochondrion matrix. The catalysed reaction is L-glutamate + NAD(+) + H2O = 2-oxoglutarate + NH4(+) + NADH + H(+). The enzyme catalyses L-glutamate + NADP(+) + H2O = 2-oxoglutarate + NH4(+) + NADPH + H(+). Mitochondrial glutamate dehydrogenase that converts L-glutamate into alpha-ketoglutarate. Plays a key role in glutamine anaplerosis by producing alpha-ketoglutarate, an important intermediate in the tricarboxylic acid cycle. This is Glutamate dehydrogenase from Electrophorus electricus (Electric eel).